The primary structure comprises 369 residues: Glutamate 5-kinase (369 aa).

Lys-9 contacts ATP. The substrate site is built by Ser-49, Asp-136, and Asn-148. ATP is bound by residues 168 to 169 and 210 to 216; these read TD and TGGMLTK. The 81-residue stretch at 275-355 folds into the PUA domain; that stretch reads RGSVYVDEGA…KGVFIHRDDW (81 aa).

The protein belongs to the glutamate 5-kinase family.

The protein localises to the cytoplasm. It catalyses the reaction L-glutamate + ATP = L-glutamyl 5-phosphate + ADP. Its pathway is amino-acid biosynthesis; L-proline biosynthesis; L-glutamate 5-semialdehyde from L-glutamate: step 1/2. In terms of biological role, catalyzes the transfer of a phosphate group to glutamate to form L-glutamate 5-phosphate. The protein is Glutamate 5-kinase of Neisseria meningitidis serogroup C / serotype 2a (strain ATCC 700532 / DSM 15464 / FAM18).